The sequence spans 215 residues: Ribosomal RNA small subunit methyltransferase G (215 aa).

Residues glycine 78, leucine 83, 128–129, and arginine 146 each bind S-adenosyl-L-methionine; that span reads AE.

The protein belongs to the methyltransferase superfamily. RNA methyltransferase RsmG family.

The protein localises to the cytoplasm. It carries out the reaction guanosine(527) in 16S rRNA + S-adenosyl-L-methionine = N(7)-methylguanosine(527) in 16S rRNA + S-adenosyl-L-homocysteine. Specifically methylates the N7 position of guanine in position 527 of 16S rRNA. This is Ribosomal RNA small subunit methyltransferase G from Anaeromyxobacter sp. (strain Fw109-5).